Reading from the N-terminus, the 300-residue chain is Tegument protein VP22 (300 aa).

Residues 1-148 form a disordered region; the sequence is MTSRRSVKSC…PARGRRPAQA (148 aa). Basic and acidic residues-rich tracts occupy residues 10 to 22 and 50 to 61; these read CPRE…HEEL and PRGEVRFLHYDE. The Nuclear localization signal signature appears at 163–166; sequence GRTK. The segment at 174–267 is interaction with gE; sequence KKLHFSTAPP…LVNPDAAQDV (94 aa). The Nuclear export signal signature appears at 232 to 244; the sequence is LNELLDLTTIRVT. Low complexity predominate over residues 269–292; sequence ATAAARGRPAGRAAATARAPARSA. The disordered stretch occupies residues 269 to 300; the sequence is ATAAARGRPAGRAAATARAPARSASRPRRPLE.

Belongs to the alphaherpesvirinae VP22 tegument protein family. As to quaternary structure, interacts with gE (via C-terminus); this interaction is necessary for the recruitment of VP22 to the Golgi and its packaging into virions. Interacts with gM (via C-terminus). Interacts with VP16; this interaction allows the formation of a tripartite complex composed of VP16, VP22 and UL41/VHS. Interacts with the capsid-binding protein UL16. Interacts with host CGAS. In terms of processing, highly phosphorylated in the host cell. Packaging is selective for underphosphorylated forms.

Its subcellular location is the virion tegument. The protein resides in the host cytoplasm. It localises to the host nucleus. It is found in the host Golgi apparatus. In terms of biological role, tegument protein that plays different roles during the time course of infection. Participates in both the accumulation of viral mRNAs and viral protein translation at late time of infection. Modulates the RNase activity of the virion host shutoff protein UL41 probably to ensure necessary levels of key cellular mRNAs and proteins. Plays a role in microtubule reorganization that occurs after viral infection by stabilizing microtubule network. Plays a role in the inhibition of host innate immune system by targeting the CGAS enzymatic activity which is the principal cytosolic DNA sensor that detects invading viral DNA. Acts by mediating disruption of liquid-like droplets in which CGAS is activated, thereby preventing CGAS activity. In Homo sapiens (Human), this protein is Tegument protein VP22.